The primary structure comprises 286 residues: DegV domain-containing protein SPs1668 (286 aa).

One can recognise a DegV domain in the interval 3 to 282; it reads FTIMTDSTAD…PNTLAVFVIG (280 aa). Residues Thr-62 and Ser-94 each coordinate hexadecanoate.

In terms of biological role, may bind long-chain fatty acids, such as palmitate, and may play a role in lipid transport or fatty acid metabolism. The polypeptide is DegV domain-containing protein SPs1668 (Streptococcus pyogenes serotype M3 (strain SSI-1)).